We begin with the raw amino-acid sequence, 176 residues long: Endothelin-2 (176 aa).

The signal sequence occupies residues 1 to 22; the sequence is MVSPAWCSIALALLLALHEGKG. A propeptide spanning residues 23–44 is cleaved from the precursor; that stretch reads QAAATMEQPASAPKGRGPHLRF. 2 cysteine pairs are disulfide-bonded: Cys-47-Cys-61 and Cys-49-Cys-57. The propeptide occupies 68–176; the sequence is VNTAGQTAPY…IPAHSRRRKR (109 aa). The tract at residues 94–109 is endothelin-like; that stretch reads CECSSAGDSACATFCH.

This sequence belongs to the endothelin/sarafotoxin family.

Its subcellular location is the secreted. Functionally, vasoconstrictor. The protein is Endothelin-2 (Edn2) of Rattus norvegicus (Rat).